The primary structure comprises 75 residues: Acyl carrier protein (75 aa).

The Carrier domain maps to 1 to 75 (MIFEKVRDII…DVVEYLSNLE (75 aa)). Ser35 carries the O-(pantetheine 4'-phosphoryl)serine modification.

Belongs to the acyl carrier protein (ACP) family. 4'-phosphopantetheine is transferred from CoA to a specific serine of apo-ACP by AcpS. This modification is essential for activity because fatty acids are bound in thioester linkage to the sulfhydryl of the prosthetic group.

Its subcellular location is the cytoplasm. Its pathway is lipid metabolism; fatty acid biosynthesis. In terms of biological role, carrier of the growing fatty acid chain in fatty acid biosynthesis. The protein is Acyl carrier protein of Thermoanaerobacter pseudethanolicus (strain ATCC 33223 / 39E) (Clostridium thermohydrosulfuricum).